Here is a 256-residue protein sequence, read N- to C-terminus: Small ribosomal subunit protein uS2 (256 aa).

This sequence belongs to the universal ribosomal protein uS2 family.

The sequence is that of Small ribosomal subunit protein uS2 from Acidiphilium cryptum (strain JF-5).